We begin with the raw amino-acid sequence, 64 residues long: Large ribosomal subunit protein bL32 (64 aa).

Residues Met-1 to Ala-23 are disordered.

Belongs to the bacterial ribosomal protein bL32 family.

This chain is Large ribosomal subunit protein bL32, found in Xylella fastidiosa (strain M23).